The sequence spans 261 residues: Short-chain-enoyl-CoA hydratase (261 aa).

The Nucleophile role is filled by glutamate 114. The active-site Proton acceptor is glutamate 134.

It belongs to the enoyl-CoA hydratase/isomerase family. In terms of assembly, homotetramer.

It carries out the reaction a short-chain (3S)-3-hydroxyacyl-CoA = a short-chain (2E)-enoyl-CoA + H2O. The protein operates within lipid metabolism; butanoate metabolism. In terms of biological role, catalyzes the reversible hydration of crotonyl-CoA. Can also use hexenoyl-CoA but not higher analogs. This is Short-chain-enoyl-CoA hydratase (crt) from Clostridium acetobutylicum (strain ATCC 824 / DSM 792 / JCM 1419 / IAM 19013 / LMG 5710 / NBRC 13948 / NRRL B-527 / VKM B-1787 / 2291 / W).